A 211-amino-acid chain; its full sequence is Protein-L-isoaspartate O-methyltransferase (211 aa).

Residue serine 60 is part of the active site.

This sequence belongs to the methyltransferase superfamily. L-isoaspartyl/D-aspartyl protein methyltransferase family.

Its subcellular location is the cytoplasm. It catalyses the reaction [protein]-L-isoaspartate + S-adenosyl-L-methionine = [protein]-L-isoaspartate alpha-methyl ester + S-adenosyl-L-homocysteine. Its function is as follows. Catalyzes the methyl esterification of L-isoaspartyl residues in peptides and proteins that result from spontaneous decomposition of normal L-aspartyl and L-asparaginyl residues. It plays a role in the repair and/or degradation of damaged proteins. The chain is Protein-L-isoaspartate O-methyltransferase from Ectopseudomonas mendocina (strain ymp) (Pseudomonas mendocina).